Here is a 349-residue protein sequence, read N- to C-terminus: Probable G-protein coupled receptor 21 (349 aa).

At 1-32 (MNSTLDGNQSSHPFCLLAFGYLETVNFCLLEV) the chain is on the extracellular side. Residues asparagine 2 and asparagine 8 are each glycosylated (N-linked (GlcNAc...) asparagine). A helical transmembrane segment spans residues 33 to 53 (LIIVFLTVLIISGNIIVIFVF). At 54-75 (HCAPLLNHHTTSYFIQTMAYAD) the chain is on the cytoplasmic side. A helical transmembrane segment spans residues 76–96 (LFVGVSCVVPSLSLLHHPLPV). At 97–104 (EESLTCQI) the chain is on the extracellular side. The helical transmembrane segment at 105–125 (FGFVVSVLKSVSMASLACISI) threads the bilayer. Residues 126-147 (DRYIAITKPLTYNTLVTPWRLR) are Cytoplasmic-facing. The helical transmembrane segment at 148–168 (LCIFLIWLYSTLVFLPSFFHW) threads the bilayer. Residues 169–191 (GKPGYHGDVFQWCAESWHTDSYF) are Extracellular-facing. Residues 192 to 212 (TLFIVMMLYAPAALIVCFTYF) traverse the membrane as a helical segment. Topologically, residues 213–252 (NIFRICQQHTKDISERQARFSSQSGETGEVQACPDKRYAM) are cytoplasmic. The chain crosses the membrane as a helical span at residues 253–273 (VLFRITSVFYILWLPYIIYFL). Over 274 to 283 (LESSTGHSNR) the chain is Extracellular. A helical transmembrane segment spans residues 284-304 (FASFLTTWLAISNSFCNCVIY). Residues 305-349 (SLSNSVFQRGLKRLSGAMCTSCASQTTANDPYTVRSKGPLNGCHI) lie on the Cytoplasmic side of the membrane.

It belongs to the G-protein coupled receptor 1 family. As to expression, not detected in the brain regions thalamus, putamen, caudate, frontal cortex, pons, hypothalamus, hippocampus.

The protein resides in the cell membrane. Functionally, orphan receptor. In Homo sapiens (Human), this protein is Probable G-protein coupled receptor 21 (GPR21).